We begin with the raw amino-acid sequence, 306 residues long: Mycothiol acetyltransferase (306 aa).

2 N-acetyltransferase domains span residues 5-162 (VWAE…TFVP) and 155-306 (VRLR…AQGS). Residues 82 to 84 (LIV) and 90 to 95 (RRGHGT) contribute to the acetyl-CoA site. Glutamate 182, lysine 222, and glutamate 238 together coordinate 1D-myo-inositol 2-(L-cysteinylamino)-2-deoxy-alpha-D-glucopyranoside. Residues 242–244 (VGV) and 249–255 (QGGGLGK) each bind acetyl-CoA. A 1D-myo-inositol 2-(L-cysteinylamino)-2-deoxy-alpha-D-glucopyranoside-binding site is contributed by tyrosine 276.

This sequence belongs to the acetyltransferase family. MshD subfamily. Monomer.

It catalyses the reaction 1D-myo-inositol 2-(L-cysteinylamino)-2-deoxy-alpha-D-glucopyranoside + acetyl-CoA = mycothiol + CoA + H(+). Its function is as follows. Catalyzes the transfer of acetyl from acetyl-CoA to desacetylmycothiol (Cys-GlcN-Ins) to form mycothiol. The chain is Mycothiol acetyltransferase from Saccharomonospora viridis (strain ATCC 15386 / DSM 43017 / JCM 3036 / CCUG 5913 / NBRC 12207 / NCIMB 9602 / P101) (Thermoactinomyces viridis).